An 810-amino-acid polypeptide reads, in one-letter code: Glycerol-3-phosphate acyltransferase (810 aa).

The short motif at 305–310 is the HXXXXD motif element; that stretch reads CHRSHI.

This sequence belongs to the GPAT/DAPAT family.

The protein resides in the cell inner membrane. It carries out the reaction sn-glycerol 3-phosphate + an acyl-CoA = a 1-acyl-sn-glycero-3-phosphate + CoA. Its pathway is phospholipid metabolism; CDP-diacylglycerol biosynthesis; CDP-diacylglycerol from sn-glycerol 3-phosphate: step 1/3. In Haemophilus influenzae (strain 86-028NP), this protein is Glycerol-3-phosphate acyltransferase.